We begin with the raw amino-acid sequence, 360 residues long: Endolytic peptidoglycan transglycosylase RlpA (360 aa).

A signal peptide spans 1–17 (MRKEWLWVGIASVLLSA). C18 carries the N-palmitoyl cysteine lipid modification. C18 carries the S-diacylglycerol cysteine lipid modification. Residues 283-359 (SAISGGYVVQ…AQQQSFIVAA (77 aa)) form the SPOR domain.

This sequence belongs to the RlpA family.

The protein resides in the cell membrane. Lytic transglycosylase with a strong preference for naked glycan strands that lack stem peptides. The sequence is that of Endolytic peptidoglycan transglycosylase RlpA from Yersinia pestis.